Consider the following 111-residue polypeptide: Small ribosomal subunit protein uS17 (111 aa).

The protein belongs to the universal ribosomal protein uS17 family. Part of the 30S ribosomal subunit.

Its function is as follows. One of the primary rRNA binding proteins, it binds specifically to the 5'-end of 16S ribosomal RNA. The sequence is that of Small ribosomal subunit protein uS17 from Methanocella arvoryzae (strain DSM 22066 / NBRC 105507 / MRE50).